The primary structure comprises 321 residues: Anthranilate phosphoribosyltransferase (321 aa).

Residues G72, 75–76 (GD), T80, 82–85 (NVST), 99–107 (KHGNVSITS), and S111 contribute to the 5-phospho-alpha-D-ribose 1-diphosphate site. G72 lines the anthranilate pocket. S84 lines the Mg(2+) pocket. Residue N102 coordinates anthranilate. R157 is an anthranilate binding site. Positions 216 and 217 each coordinate Mg(2+).

It belongs to the anthranilate phosphoribosyltransferase family. In terms of assembly, homodimer. Requires Mg(2+) as cofactor.

It carries out the reaction N-(5-phospho-beta-D-ribosyl)anthranilate + diphosphate = 5-phospho-alpha-D-ribose 1-diphosphate + anthranilate. It participates in amino-acid biosynthesis; L-tryptophan biosynthesis; L-tryptophan from chorismate: step 2/5. Catalyzes the transfer of the phosphoribosyl group of 5-phosphorylribose-1-pyrophosphate (PRPP) to anthranilate to yield N-(5'-phosphoribosyl)-anthranilate (PRA). The protein is Anthranilate phosphoribosyltransferase of Methanococcus maripaludis (strain DSM 14266 / JCM 13030 / NBRC 101832 / S2 / LL).